The primary structure comprises 701 residues: ABC transporter G family member 23 (701 aa).

The 231-residue stretch at 7–237 folds into the ABC transporter domain; the sequence is INLNNVSRSY…YECSLLEDVY (231 aa). 39–46 contacts ATP; sequence GSSGSGKT. A run of 6 helical transmembrane segments spans residues 335 to 355, 493 to 513, 541 to 561, 574 to 596, 608 to 628, and 665 to 685; these read FPLVFEIISPSLLITLFFLAI, FLAPAMICIITYVHCMNFLSI, HILAHIPILLVQFSIQLLIAV, LIYLFFILINTVGMCQGILISLI, LAIFICSLCMAGIIWPTEAII, and LIIIISYIIGTFSLIVISTPI. In terms of domain architecture, ABC transmembrane type-2 spans 459 to 686; sequence FQKAFNKIAN…SLIVISTPIG (228 aa).

The protein belongs to the ABC transporter superfamily. ABCG family.

The protein resides in the membrane. The sequence is that of ABC transporter G family member 23 (abcG23) from Dictyostelium discoideum (Social amoeba).